The sequence spans 21 residues: Protein YadW (21 aa).

This Escherichia coli (strain K12) protein is Protein YadW.